Consider the following 378-residue polypeptide: Odorant receptor 33a (378 aa).

Over 1–33 the chain is Cytoplasmic; that stretch reads MDSRRKVRSENLYKTYWLYWRLLGVEGDYPFRR. A helical membrane pass occupies residues 34-54; that stretch reads LVDFTITSFITILFPVHLILG. Over 55–62 the chain is Extracellular; the sequence is MYKKPQIQ. The chain crosses the membrane as a helical span at residues 63 to 83; it reads VFRSLHFTSECLFCSYKFFCF. Residues 84–127 lie on the Cytoplasmic side of the membrane; the sequence is RWKLKEIKTIEGLLQDLDSRVESEEERNYFNQNPSRVARMLSKS. The chain crosses the membrane as a helical span at residues 128–148; sequence YLVAAISAIITATVAGLFSTG. The Extracellular portion of the chain corresponds to 149–163; that stretch reads RNLMYLGWFPYDFQA. The chain crosses the membrane as a helical span at residues 164–184; the sequence is TAAIYWISFSYQAIGSSLLIL. Residues 185–254 lie on the Cytoplasmic side of the membrane; the sequence is ENLANDSYPP…LLRSTLHLSQ (70 aa). Residues 255-275 form a helical membrane-spanning segment; that stretch reads LGQFLSSGINISITLINILFF. Residues 276–285 lie on the Extracellular side of the membrane; the sequence is AENNFAMLYY. A helical membrane pass occupies residues 286 to 306; the sequence is AVFFAAMLIELFPSCYYGILM. Over 307–355 the chain is Cytoplasmic; that stretch reads TMEFDKLPYAIFSSNWLKMDKRYNRSLIILMQLTLVPVNIKAGGIVGID. The helical transmembrane segment at 356-376 threads the bilayer; sequence MSAFFATVRMAYSFYTLALSF. The Extracellular portion of the chain corresponds to 377–378; it reads RV.

It belongs to the insect chemoreceptor superfamily. Heteromeric odorant receptor channel (TC 1.A.69) family. Or2a subfamily. As to quaternary structure, interacts with Orco. Complexes exist early in the endomembrane system in olfactory sensory neurons (OSNs), coupling these complexes to the conserved ciliary trafficking pathway. In terms of tissue distribution, expressed in 1-2 cells on the distal edge of the antenna but not the maxillary palp.

Its subcellular location is the cell membrane. In terms of biological role, odorant receptor which mediates acceptance or avoidance behavior, depending on its substrates. The odorant receptor repertoire encodes a large collection of odor stimuli that vary widely in identity, intensity, and duration. May form a complex with Orco to form odorant-sensing units, providing sensitive and prolonged odorant signaling and calcium permeability. In Drosophila melanogaster (Fruit fly), this protein is Odorant receptor 33a (Or33a).